Consider the following 212-residue polypeptide: ATP-dependent Clp protease proteolytic subunit (212 aa).

The active-site Nucleophile is the S112. H137 is an active-site residue.

It belongs to the peptidase S14 family. As to quaternary structure, fourteen ClpP subunits assemble into 2 heptameric rings which stack back to back to give a disk-like structure with a central cavity, resembling the structure of eukaryotic proteasomes.

It is found in the cytoplasm. The catalysed reaction is Hydrolysis of proteins to small peptides in the presence of ATP and magnesium. alpha-casein is the usual test substrate. In the absence of ATP, only oligopeptides shorter than five residues are hydrolyzed (such as succinyl-Leu-Tyr-|-NHMec, and Leu-Tyr-Leu-|-Tyr-Trp, in which cleavage of the -Tyr-|-Leu- and -Tyr-|-Trp bonds also occurs).. Functionally, cleaves peptides in various proteins in a process that requires ATP hydrolysis. Has a chymotrypsin-like activity. Plays a major role in the degradation of misfolded proteins. This Thiobacillus denitrificans (strain ATCC 25259 / T1) protein is ATP-dependent Clp protease proteolytic subunit.